Reading from the N-terminus, the 352-residue chain is Large ribosomal subunit protein uL5m (352 aa).

The tract at residues 28–109 (STQTGAGAAA…HPIQSPPSSD (82 aa)) is disordered. The segment covering 63–80 (EEDKKEFRPWKRAADRKA) has biased composition (basic and acidic residues).

This sequence belongs to the universal ribosomal protein uL5 family. In terms of assembly, component of the mitochondrial large ribosomal subunit (mt-LSU). Mature N.crassa 74S mitochondrial ribosomes consist of a small (37S) and a large (54S) subunit. The 37S small subunit contains a 16S ribosomal RNA (16S mt-rRNA) and 32 different proteins. The 54S large subunit contains a 23S rRNA (23S mt-rRNA) and 42 different proteins. Unlike bacterial L5, uL5m does not bind zinc.

The protein localises to the mitochondrion. Functionally, component of the mitochondrial ribosome (mitoribosome), a dedicated translation machinery responsible for the synthesis of mitochondrial genome-encoded proteins, including at least some of the essential transmembrane subunits of the mitochondrial respiratory chain. The mitoribosomes are attached to the mitochondrial inner membrane and translation products are cotranslationally integrated into the membrane. The sequence is that of Large ribosomal subunit protein uL5m (mrpl7) from Neurospora crassa (strain ATCC 24698 / 74-OR23-1A / CBS 708.71 / DSM 1257 / FGSC 987).